A 515-amino-acid chain; its full sequence is Maturase K (515 aa).

It belongs to the intron maturase 2 family. MatK subfamily.

The protein localises to the plastid. Its subcellular location is the chloroplast. Its function is as follows. Usually encoded in the trnK tRNA gene intron. Probably assists in splicing its own and other chloroplast group II introns. The protein is Maturase K of Pinus halepensis (Aleppo pine).